The primary structure comprises 110 residues: Insulin (110 aa).

An N-terminal signal peptide occupies residues 1–24 (MALWTRLLPLLALLALLGPDPAQA). Cystine bridges form between cysteine 31-cysteine 96, cysteine 43-cysteine 109, and cysteine 95-cysteine 100. Residues 57-87 (EVEEQQGGQVELGGGPGAGLPQPLALEMALQ) constitute a propeptide, c peptide.

The protein belongs to the insulin family. As to quaternary structure, heterodimer of a B chain and an A chain linked by two disulfide bonds.

The protein localises to the secreted. Insulin decreases blood glucose concentration. It increases cell permeability to monosaccharides, amino acids and fatty acids. It accelerates glycolysis, the pentose phosphate cycle, and glycogen synthesis in liver. This is Insulin (INS) from Ictidomys tridecemlineatus (Thirteen-lined ground squirrel).